The primary structure comprises 20 residues: ATP synthase subunit beta, chloroplastic (20 aa).

Over residues 1–10 the composition is skewed to polar residues; the sequence is METTNESLGY. The interval 1–20 is disordered; it reads METTNESLGYTDQIIGPVLD.

Belongs to the ATPase alpha/beta chains family. As to quaternary structure, F-type ATPases have 2 components, CF(1) - the catalytic core - and CF(0) - the membrane proton channel. CF(1) has five subunits: alpha(3), beta(3), gamma(1), delta(1), epsilon(1). CF(0) has four main subunits: a(1), b(1), b'(1) and c(9-12).

The protein localises to the plastid. The protein resides in the chloroplast thylakoid membrane. The enzyme catalyses ATP + H2O + 4 H(+)(in) = ADP + phosphate + 5 H(+)(out). Functionally, produces ATP from ADP in the presence of a proton gradient across the membrane. The catalytic sites are hosted primarily by the beta subunits. The protein is ATP synthase subunit beta, chloroplastic of Chattonella marina var. antiqua (Red tide flagellate).